A 305-amino-acid chain; its full sequence is Probable aspartoacylase (305 aa).

His13 and Glu16 together coordinate Zn(2+). Substrate-binding positions include Arg55 and Asn62 to Arg63. A Zn(2+)-binding site is contributed by His105. The substrate site is built by Glu163 and Tyr273.

Belongs to the AspA/AstE family. Aspartoacylase subfamily. Zn(2+) serves as cofactor.

It carries out the reaction an N-acyl-L-aspartate + H2O = a carboxylate + L-aspartate. This Prochlorococcus marinus (strain NATL2A) protein is Probable aspartoacylase.